We begin with the raw amino-acid sequence, 255 residues long: MSMSEEEKMVLQQKIRDRTPKLPISKVKRIGKVDPESILTSNMAYVATAFATELFVQSFVEQALFGAQLRRGKKKAGLRLTNDALVECVRNRDDYIFLEDVVRHIEKPKTSSGLHKLSAKPVGQGQEAEQKDASMEEDIPEEDLQEDDEMDVDETEPAERPAASKASDVNKASASAKSILSAFKYAPESAPQIHGSTQTEEDEGDEKEEDEDEEEEIDPEVQTQLQEVEKMNVVADLDEESEVSSDEDEASADDG.

The interval 109-255 (KTSSGLHKLS…DEDEASADDG (147 aa)) is disordered. Positions 135–156 (MEEDIPEEDLQEDDEMDVDETE) are enriched in acidic residues. The segment covering 171–184 (KASASAKSILSAFK) has biased composition (low complexity). Acidic residues-rich tracts occupy residues 199–219 (TEED…EIDP) and 236–255 (DLDE…ADDG).

In terms of assembly, heterotetramer. Consists of four subunits: POL2, DPB2, DPB3 and DPB4.

The protein localises to the nucleus. Functionally, as accessory component of the DNA polymerase epsilon (DNA polymerase II) participates in chromosomal DNA replication. The protein is DNA polymerase epsilon subunit C (DPB3) of Candida glabrata (strain ATCC 2001 / BCRC 20586 / JCM 3761 / NBRC 0622 / NRRL Y-65 / CBS 138) (Yeast).